The following is a 322-amino-acid chain: Ribosomal RNA small subunit methyltransferase H (322 aa).

S-adenosyl-L-methionine-binding positions include 42 to 44, aspartate 62, phenylalanine 86, aspartate 107, and glutamine 114; that span reads GGH.

This sequence belongs to the methyltransferase superfamily. RsmH family.

It is found in the cytoplasm. It carries out the reaction cytidine(1402) in 16S rRNA + S-adenosyl-L-methionine = N(4)-methylcytidine(1402) in 16S rRNA + S-adenosyl-L-homocysteine + H(+). In terms of biological role, specifically methylates the N4 position of cytidine in position 1402 (C1402) of 16S rRNA. This chain is Ribosomal RNA small subunit methyltransferase H, found in Janthinobacterium sp. (strain Marseille) (Minibacterium massiliensis).